Reading from the N-terminus, the 308-residue chain is Ribosomal RNA small subunit methyltransferase H (308 aa).

S-adenosyl-L-methionine-binding positions include 32 to 34 (AGH), D51, F78, D99, and Q106.

This sequence belongs to the methyltransferase superfamily. RsmH family.

It is found in the cytoplasm. It carries out the reaction cytidine(1402) in 16S rRNA + S-adenosyl-L-methionine = N(4)-methylcytidine(1402) in 16S rRNA + S-adenosyl-L-homocysteine + H(+). Specifically methylates the N4 position of cytidine in position 1402 (C1402) of 16S rRNA. This chain is Ribosomal RNA small subunit methyltransferase H, found in Mesoplasma florum (strain ATCC 33453 / NBRC 100688 / NCTC 11704 / L1) (Acholeplasma florum).